Consider the following 435-residue polypeptide: MDTIFAVSSGLLPSGVAVIRVSGPRVVDIVKTLCGCLPKARFMHHGDLIARDGSFLDSALTVFFPRPHSFTGEDCAEFHLHGGKAVVNRFLDELSTFTGCRLAEAGEFSRRAFIEGKIDLVQAEGLADLIEAETESQRRLAVMGANGHLTELYRHWRNKLMTARALIEAELDFSDEADVSNFSSDKVWQNMQELSDSLCEHIAEGERANILRDGIKVVIVGVPNSGKSSIINRLAGRPVAIVTEEEGTTRDALEVRLILGGLPVLVMDTAGFRETESKIEQLGIDIAKQHVLDADLVILVDDMKNPQKISLPNTSAEIWRVGNKLDICEGDKTRWPIQFSALNGLNFDYFLKEIESFCLHRIAEIGNIFPARKRQIQLLKEAVKEIDSSINYTFLDLSLRAEHLRRASDALGRITGDIDVEDLLDIIFSQFCIGK.

Residues arginine 20, glutamate 77, and lysine 117 each contribute to the (6S)-5-formyl-5,6,7,8-tetrahydrofolate site. A TrmE-type G domain is found at 214–359; sequence GIKVVIVGVP…FLKEIESFCL (146 aa). Residues 224–229, 243–249, and 268–271 contribute to the GTP site; these read NSGKSS, TEEEGTT, and DTAG. Positions 228 and 249 each coordinate Mg(2+). Lysine 435 contributes to the (6S)-5-formyl-5,6,7,8-tetrahydrofolate binding site.

Belongs to the TRAFAC class TrmE-Era-EngA-EngB-Septin-like GTPase superfamily. TrmE GTPase family. Homodimer. Heterotetramer of two MnmE and two MnmG subunits. Requires K(+) as cofactor.

Its subcellular location is the cytoplasm. Exhibits a very high intrinsic GTPase hydrolysis rate. Involved in the addition of a carboxymethylaminomethyl (cmnm) group at the wobble position (U34) of certain tRNAs, forming tRNA-cmnm(5)s(2)U34. The sequence is that of tRNA modification GTPase MnmE from Bartonella bacilliformis (strain ATCC 35685 / KC583 / Herrer 020/F12,63).